A 393-amino-acid polypeptide reads, in one-letter code: MHRITILGATGSIGESTLDVVRRHADRYVVHALTAHRQVRKLADQCVEFRPARAVVGTAEAALELETLLRDAGVKTEVSHGEAALESVAADAQTDSVMAAIVGAAGLRPTLAAARAGKRVLLANKEALVMSGRIFMDAVREHGATLLPIDSEHNAIFQCLPADDPRYGRGVARVLLTASGGPFRTRDPATLHDISPDQACAHPNWVMGRKISVDSATMMNKGLEVIEAHWLFGAPAERIEVLIHPQSIVHSMVAYTDGSVLAQLGNPDMRTPIAYGLAYPERIDAGVTPLDLTVAGGLHFEKPDLVRFPCLGLAFDALRAGGVAPAALNAANEVAVEAFLGGTVRFTDIAGIVRQVLEATPQGPADTLEAVLSADALAREAAREGVAALAAKR.

Residues threonine 10, glycine 11, serine 12, isoleucine 13, arginine 37, glutamine 38, and asparagine 124 each coordinate NADPH. Position 125 (lysine 125) interacts with 1-deoxy-D-xylulose 5-phosphate. Position 126 (glutamate 126) interacts with NADPH. Aspartate 150 is a Mn(2+) binding site. Residues serine 151, glutamate 152, serine 179, and histidine 202 each coordinate 1-deoxy-D-xylulose 5-phosphate. Residue glutamate 152 participates in Mn(2+) binding. Residue glycine 208 participates in NADPH binding. Residues serine 215, asparagine 220, lysine 221, and glutamate 224 each contribute to the 1-deoxy-D-xylulose 5-phosphate site. Glutamate 224 contributes to the Mn(2+) binding site.

Belongs to the DXR family. Requires Mg(2+) as cofactor. The cofactor is Mn(2+).

The catalysed reaction is 2-C-methyl-D-erythritol 4-phosphate + NADP(+) = 1-deoxy-D-xylulose 5-phosphate + NADPH + H(+). The protein operates within isoprenoid biosynthesis; isopentenyl diphosphate biosynthesis via DXP pathway; isopentenyl diphosphate from 1-deoxy-D-xylulose 5-phosphate: step 1/6. Its function is as follows. Catalyzes the NADPH-dependent rearrangement and reduction of 1-deoxy-D-xylulose-5-phosphate (DXP) to 2-C-methyl-D-erythritol 4-phosphate (MEP). This chain is 1-deoxy-D-xylulose 5-phosphate reductoisomerase, found in Cupriavidus necator (strain ATCC 17699 / DSM 428 / KCTC 22496 / NCIMB 10442 / H16 / Stanier 337) (Ralstonia eutropha).